A 152-amino-acid polypeptide reads, in one-letter code: Alpha-amylase inhibitor BDAI-1 (152 aa).

A signal peptide spans 1 to 30 (MGAMWMKSMLLVLLLCMLMVTPMTGARSDN).

It belongs to the protease inhibitor I6 (cereal trypsin/alpha-amylase inhibitor) family. As to quaternary structure, homodimer. In terms of processing, five disulfide bonds, which are essential for the inhibitor activity, are probably present. As to expression, endosperm.

It localises to the secreted. Its function is as follows. Could be involved in insect defense mechanisms. Inhibits insect-type alpha-amylase. This chain is Alpha-amylase inhibitor BDAI-1 (IAD1), found in Hordeum vulgare (Barley).